The primary structure comprises 320 residues: Beta-ketoacyl-[acyl-carrier-protein] synthase III (320 aa).

Residues cysteine 114 and histidine 247 contribute to the active site. The interval 248–252 (QANRR) is ACP-binding. Asparagine 277 is a catalytic residue.

This sequence belongs to the thiolase-like superfamily. FabH family. As to quaternary structure, homodimer.

The protein resides in the cytoplasm. The catalysed reaction is malonyl-[ACP] + acetyl-CoA + H(+) = 3-oxobutanoyl-[ACP] + CO2 + CoA. It participates in lipid metabolism; fatty acid biosynthesis. Catalyzes the condensation reaction of fatty acid synthesis by the addition to an acyl acceptor of two carbons from malonyl-ACP. Catalyzes the first condensation reaction which initiates fatty acid synthesis and may therefore play a role in governing the total rate of fatty acid production. Possesses both acetoacetyl-ACP synthase and acetyl transacylase activities. Its substrate specificity determines the biosynthesis of branched-chain and/or straight-chain of fatty acids. This chain is Beta-ketoacyl-[acyl-carrier-protein] synthase III, found in Neisseria meningitidis serogroup C (strain 053442).